The sequence spans 456 residues: UDP-N-acetylglucosamine 1-carboxyvinyltransferase (456 aa).

34–35 (KN) serves as a coordination point for phosphoenolpyruvate. Arg104 contributes to the UDP-N-acetyl-alpha-D-glucosamine binding site. Residue Cys128 is the Proton donor of the active site. Residue Cys128 is modified to 2-(S-cysteinyl)pyruvic acid O-phosphothioketal. Asp319 and Ile341 together coordinate UDP-N-acetyl-alpha-D-glucosamine.

The protein belongs to the EPSP synthase family. MurA subfamily.

The protein resides in the cytoplasm. It catalyses the reaction phosphoenolpyruvate + UDP-N-acetyl-alpha-D-glucosamine = UDP-N-acetyl-3-O-(1-carboxyvinyl)-alpha-D-glucosamine + phosphate. Its pathway is cell wall biogenesis; peptidoglycan biosynthesis. Its function is as follows. Cell wall formation. Adds enolpyruvyl to UDP-N-acetylglucosamine. The chain is UDP-N-acetylglucosamine 1-carboxyvinyltransferase from Prochlorococcus marinus (strain AS9601).